Here is a 180-residue protein sequence, read N- to C-terminus: MLKFLSEIGPVIAFFAGFFYGGGIQHATLYMLITSVICITLCYVIDKKVSKLSIISTTVLLVSGSITLISGDSMYIKIKPTILYVIFGIIFLMSGIRKNPFIKYALESIVRLKEESWITLSYRTAAFFFFMAVVNEVVWRNCSDETWVKFKVFGVIPITFIFILLQLPLLLKNKLPDSKI.

6 consecutive transmembrane segments (helical) span residues 4-24 (FLSE…GGGI), 25-45 (QHAT…CYVI), 49-69 (VSKL…ITLI), 76-96 (IKIK…MSGI), 118-138 (ITLS…NEVV), and 150-170 (FKVF…LPLL).

Belongs to the YciB family.

It is found in the cell inner membrane. Its function is as follows. Plays a role in cell envelope biogenesis, maintenance of cell envelope integrity and membrane homeostasis. The protein is Inner membrane-spanning protein YciB of Rickettsia rickettsii (strain Iowa).